A 172-amino-acid polypeptide reads, in one-letter code: C-phycocyanin beta subunit (172 aa).

Position 72 is an N4-methylasparagine (Asn72). Residues Cys82 and Cys153 each contribute to the (2R,3E)-phycocyanobilin site.

It belongs to the phycobiliprotein family. The alpha and beta subunits exhibit high affinity for one another and form heterodimers. These heterodimers form heterohexamers of 3 alpha and 3 beta subunits which, in turn, aggregate into a heterododecamer consisting of 2 heterohexamers. In terms of processing, contains two covalently linked bilin chromophores.

The protein localises to the cellular thylakoid membrane. Functionally, light-harvesting photosynthetic bile pigment-protein from the phycobiliprotein complex (phycobilisome, PBS). Phycocyanin is the major phycobiliprotein in the PBS rod. This Arthrospira platensis (Spirulina platensis) protein is C-phycocyanin beta subunit (cpcB).